The sequence spans 132 residues: Fatty acid-binding protein, brain (132 aa).

Valine 2 is subject to N-acetylvaline. Residue 127 to 129 participates in a fatty acid binding; sequence RHY.

This sequence belongs to the calycin superfamily. Fatty-acid binding protein (FABP) family. As to quaternary structure, monomer.

It is found in the cytoplasm. FABPs are thought to play a role in the intracellular transport of long-chain fatty acids and their acyl-CoA esters. Binds oleic and palmitic acids but not palmitoyl CoA. This chain is Fatty acid-binding protein, brain (FABP7), found in Bos taurus (Bovine).